A 189-amino-acid polypeptide reads, in one-letter code: Auxin-induced protein IAA4 (189 aa).

The short motif at Leu-8 to Leu-12 is the EAR-like (transcriptional repression) element. Residues Gly-92–Gly-179 enclose the PB1 domain.

The protein belongs to the Aux/IAA family. Homodimers and heterodimers. Phosphorylated by phytochrome A in vitro.

Its subcellular location is the nucleus. In terms of biological role, aux/IAA proteins are short-lived transcriptional factors that function as repressors of early auxin response genes at low auxin concentrations. Repression is thought to result from the interaction with auxin response factors (ARFs), proteins that bind to the auxin-responsive promoter element (AuxRE). Formation of heterodimers with ARF proteins may alter their ability to modulate early auxin response genes expression. The chain is Auxin-induced protein IAA4 (IAA4/5) from Pisum sativum (Garden pea).